The chain runs to 394 residues: Dual-specificity RNA methyltransferase RlmN (394 aa).

Residue Glu-115 is the Proton acceptor of the active site. The Radical SAM core domain occupies 121–363 (DEGRGTLCVS…SPIRTPRGED (243 aa)). A disulfide bridge connects residues Cys-128 and Cys-368. Cys-135, Cys-139, and Cys-142 together coordinate [4Fe-4S] cluster. Residues 194–195 (GE), Ser-226, 248–250 (SFH), and Asn-325 contribute to the S-adenosyl-L-methionine site. The active-site S-methylcysteine intermediate is Cys-368.

Belongs to the radical SAM superfamily. RlmN family. [4Fe-4S] cluster is required as a cofactor.

The protein localises to the cytoplasm. It catalyses the reaction adenosine(2503) in 23S rRNA + 2 reduced [2Fe-2S]-[ferredoxin] + 2 S-adenosyl-L-methionine = 2-methyladenosine(2503) in 23S rRNA + 5'-deoxyadenosine + L-methionine + 2 oxidized [2Fe-2S]-[ferredoxin] + S-adenosyl-L-homocysteine. The catalysed reaction is adenosine(37) in tRNA + 2 reduced [2Fe-2S]-[ferredoxin] + 2 S-adenosyl-L-methionine = 2-methyladenosine(37) in tRNA + 5'-deoxyadenosine + L-methionine + 2 oxidized [2Fe-2S]-[ferredoxin] + S-adenosyl-L-homocysteine. Functionally, specifically methylates position 2 of adenine 2503 in 23S rRNA and position 2 of adenine 37 in tRNAs. m2A2503 modification seems to play a crucial role in the proofreading step occurring at the peptidyl transferase center and thus would serve to optimize ribosomal fidelity. This chain is Dual-specificity RNA methyltransferase RlmN, found in Roseobacter denitrificans (strain ATCC 33942 / OCh 114) (Erythrobacter sp. (strain OCh 114)).